The sequence spans 1130 residues: Serine/threonine-protein kinase LATS1 (1130 aa).

Residues 1 to 11 show a composition bias toward basic and acidic residues; that stretch reads MKRSEKPEGYR. A disordered region spans residues 1–71; the sequence is MKRSEKPEGY…PRQVRNPPKF (71 aa). Over residues 19–30 the composition is skewed to polar residues; it reads PASNYTVSSRQM. Residues 46-64 show a composition bias toward basic and acidic residues; sequence DAAKAEHNMSKMSTEDPRQ. One can recognise a UBA domain in the interval 100-141; that stretch reads EVNPQMLQDLQAAGFDEDMVIQALQKTNNRSIEAAIEFISKM. A disordered region spans residues 149–276; sequence EQMAAAAARP…SWEPNSQTKR (128 aa). Residues 167 to 179 are compositionally biased toward polar residues; that stretch reads NVQQSVNRKQSWK. The segment covering 235-268 has biased composition (pro residues); the sequence is NPPPPPQVRSVTPPPPPRGQTPPPRGTTPPPPSW. Phosphothreonine is present on T246. The residue at position 278 (S278) is a Phosphoserine. Disordered stretches follow at residues 294–321, 365–405, 432–484, and 515–631; these read GAWQ…RGIS, AGTV…NGSI, NWPQ…PSAT, and THPS…ESRI. Pro residues predominate over residues 300-312; that stretch reads YPPPPLNTSPMNP. The PPxY motif 1 signature appears at 373–376; the sequence is PPPY. The segment covering 381-405 has biased composition (polar residues); that stretch reads ANGQSPSALQTGGSAAPSSYTNGSI. Low complexity predominate over residues 434-447; that stretch reads PQSSSAPAQSSPSS. The segment covering 454-482 has biased composition (polar residues); that stretch reads WQPNIPVRSNSFNNPLGNRASHSANSQPS. S464 bears the Phosphoserine; by NUAK1 and NUAK2 mark. An interaction with YAP1 region spans residues 526 to 655; sequence TVQPSPFPEG…HVENVLKSHQ (130 aa). The PPxY motif 2 signature appears at 556–559; it reads PPPY. Over residues 579 to 609 the composition is skewed to basic and acidic residues; the sequence is PSKEDQPSLPKEDESEKSYENVDSGDKEKKQ. S613 is modified (phosphoserine). The segment covering 621-630 has biased composition (basic and acidic residues); that stretch reads KKDEERRESR. S674 is modified (phosphoserine). The 306-residue stretch at 705-1010 folds into the Protein kinase domain; that stretch reads FVKIKTLGIG…ADEIKAHPFF (306 aa). ATP is bound by residues 711 to 719 and K734; that span reads LGIGAFGEV. D828 functions as the Proton acceptor in the catalytic mechanism. A Phosphoserine; by STK3/MST2 modification is found at S909. Residues 1011 to 1090 enclose the AGC-kinase C-terminal domain; it reads KTIDFSSDLR…RRFFDDNGYP (80 aa). Phosphothreonine; by STK3/MST2 is present on T1079. The disordered stretch occupies residues 1104–1130; sequence SQGSEQQSDEDDQNTGSEIKNRDLVYV.

The protein belongs to the protein kinase superfamily. AGC Ser/Thr protein kinase family. Complexes with CDK1 in early mitosis. LATS1-associated CDK1 has no mitotic cyclin partner and no apparent kinase activity. Binds phosphorylated ZYX, locating this protein to the mitotic spindle and suggesting a role for actin regulatory proteins during mitosis. Binds to and colocalizes with LIMK1 at the actomyosin contractile ring during cytokinesis. Interacts (via PPxY motif 2) with YAP1 (via WW domains). Interacts with MOB1A and MOB1B. Interacts with LIMD1, WTIP and AJUBA. Interacts with ESR1, DCAF1 and DCAF13; probably recruits DCAF1 and DCAF13 to ESR1 to promote ESR1 ubiquitination and ubiquitin-mediated proteasomal degradation. Interacts with STK3/MST2; this interaction is inhibited in the presence of DLG5. Interacts with SCRIB in the presence of DLG5. Interacts with WWTR1/TAZ. Interacts with WWC1, WWC2 and WWC3 (via their WW domains). Mg(2+) serves as cofactor. Post-translationally, autophosphorylated and phosphorylated during M-phase of the cell cycle. Phosphorylated by STK3/MST2 at Ser-909 and Thr-1079, which results in its activation. Phosphorylated by MAP4Ks; in parallel to STK3/MST2 and resulting to its activation. Phosphorylation at Ser-464 by NUAK1 and NUAK2 leads to decreased protein level and is required to regulate cellular senescence and cellular ploidy. Expressed in all adult tissues examined except for lung and kidney.

The protein resides in the cytoplasm. Its subcellular location is the cytoskeleton. It is found in the microtubule organizing center. The protein localises to the centrosome. It localises to the spindle. The protein resides in the midbody. Its subcellular location is the spindle pole body. The enzyme catalyses L-seryl-[protein] + ATP = O-phospho-L-seryl-[protein] + ADP + H(+). It catalyses the reaction L-threonyl-[protein] + ATP = O-phospho-L-threonyl-[protein] + ADP + H(+). Functionally, negative regulator of YAP1 in the Hippo signaling pathway that plays a pivotal role in organ size control and tumor suppression by restricting proliferation and promoting apoptosis. The core of this pathway is composed of a kinase cascade wherein STK3/MST2 and STK4/MST1, in complex with its regulatory protein SAV1, phosphorylates and activates LATS1/2 in complex with its regulatory protein MOB1, which in turn phosphorylates and inactivates YAP1 oncoprotein and WWTR1/TAZ. Phosphorylation of YAP1 by LATS1 inhibits its translocation into the nucleus to regulate cellular genes important for cell proliferation, cell death, and cell migration. Acts as a tumor suppressor which plays a critical role in maintenance of ploidy through its actions in both mitotic progression and the G1 tetraploidy checkpoint. Negatively regulates G2/M transition by down-regulating CDK1 kinase activity. Involved in the control of p53 expression. Affects cytokinesis by regulating actin polymerization through negative modulation of LIMK1. May also play a role in endocrine function. Plays a role in mammary gland epithelial cell differentiation, both through the Hippo signaling pathway and the intracellular estrogen receptor signaling pathway by promoting the degradation of ESR1. Acts as an activator of the NLRP3 inflammasome by mediating phosphorylation of 'Ser-265' of NLRP3 following NLRP3 palmitoylation, promoting NLRP3 activation by NEK7. In Homo sapiens (Human), this protein is Serine/threonine-protein kinase LATS1.